A 95-amino-acid chain; its full sequence is Complement inhibitor RaCI5 (95 aa).

An N-terminal signal peptide occupies residues 1–21 (MNAVIVLCVTISAVLIHQCYS). 3 disulfide bridges follow: Cys-35/Cys-59, Cys-40/Cys-61, and Cys-55/Cys-76.

The protein belongs to the RaCI family. As to expression, expressed in salivary glands.

Its subcellular location is the secreted. In terms of biological role, complement inhibitor. Prevents complement-mediated C5 activation by binding to C5. Binds C5 at a different binding site than the other tick complement inhibitors OmCI and CirpT1, and the drug eculizumab. The sequence is that of Complement inhibitor RaCI5 from Rhipicephalus appendiculatus (Brown ear tick).